Reading from the N-terminus, the 218-residue chain is Structural protein V19 (218 aa).

The protein localises to the virion. The protein is Structural protein V19 of Sputnik virophage.